The chain runs to 234 residues: Triosephosphate isomerase (234 aa).

8-10 provides a ligand contact to substrate; sequence NFK. His-90 acts as the Electrophile in catalysis. Catalysis depends on Glu-159, which acts as the Proton acceptor. The substrate site is built by Gly-165 and Ser-197.

The protein belongs to the triosephosphate isomerase family. As to quaternary structure, homodimer.

The protein localises to the cytoplasm. It carries out the reaction D-glyceraldehyde 3-phosphate = dihydroxyacetone phosphate. It functions in the pathway carbohydrate biosynthesis; gluconeogenesis. Its pathway is carbohydrate degradation; glycolysis; D-glyceraldehyde 3-phosphate from glycerone phosphate: step 1/1. Its function is as follows. Involved in the gluconeogenesis. Catalyzes stereospecifically the conversion of dihydroxyacetone phosphate (DHAP) to D-glyceraldehyde-3-phosphate (G3P). The chain is Triosephosphate isomerase from Helicobacter pylori (strain J99 / ATCC 700824) (Campylobacter pylori J99).